We begin with the raw amino-acid sequence, 312 residues long: uncharacterized protein (312 aa).

Residues serine 200, aspartate 261, and histidine 292 each act as charge relay system in the active site.

This sequence belongs to the AB hydrolase superfamily. AB hydrolase 2 family.

This is an uncharacterized protein from Acanthamoeba polyphaga mimivirus (APMV).